The chain runs to 144 residues: Cysteine desulfuration protein SufE (144 aa).

Cysteine 51 functions as the Cysteine persulfide intermediate in the catalytic mechanism.

The protein belongs to the SufE family. In terms of assembly, homodimer. Interacts with SufS.

It is found in the cytoplasm. The protein operates within cofactor biosynthesis; iron-sulfur cluster biosynthesis. Participates in cysteine desulfuration mediated by SufS. Cysteine desulfuration mobilizes sulfur from L-cysteine to yield L-alanine and constitutes an essential step in sulfur metabolism for biosynthesis of a variety of sulfur-containing biomolecules. Functions as a sulfur acceptor for SufS, by mediating the direct transfer of the sulfur atom from the S-sulfanylcysteine of SufS, an intermediate product of cysteine desulfuration process. The chain is Cysteine desulfuration protein SufE from Wigglesworthia glossinidia brevipalpis.